A 159-amino-acid chain; its full sequence is Abscisic acid and environmental stress-inducible protein (159 aa).

Repeat copies occupy residues 38–49 (GGGYNHGGGGYN), 50–61 (GGGYNHGGGGYN), 63–74 (GGGYNHGGGGYN), 77–88 (GGGYNHGGGGYN), 91–102 (GGGYNHGGGGYN), and 105–116 (GGGYNHGGGGYN). The segment at 38–135 (GGGYNHGGGG…GYNHGGGGCQ (98 aa)) is 7 X 12 AA repeats of G-G-G-Y-N-H-G-G-G-Y-N. A 7; approximate repeat occupies 124 to 135 (GGGYNHGGGGCQ).

It belongs to the GRP family.

The polypeptide is Abscisic acid and environmental stress-inducible protein (Medicago sativa subsp. falcata (Sickle medic)).